The primary structure comprises 428 residues: Maltoporin 1 (428 aa).

A signal peptide spans methionine 1–alanine 25.

Belongs to the porin LamB (TC 1.B.3) family. As to quaternary structure, homotrimer formed of three 18-stranded antiparallel beta-barrels, containing three independent channels.

The protein localises to the cell outer membrane. It catalyses the reaction beta-maltose(in) = beta-maltose(out). In terms of biological role, involved in the transport of maltose and maltodextrins. The chain is Maltoporin 1 from Aeromonas salmonicida (strain A449).